The chain runs to 265 residues: GTP cyclohydrolase FolE2 (265 aa).

This sequence belongs to the GTP cyclohydrolase IV family.

The enzyme catalyses GTP + H2O = 7,8-dihydroneopterin 3'-triphosphate + formate + H(+). Its pathway is cofactor biosynthesis; 7,8-dihydroneopterin triphosphate biosynthesis; 7,8-dihydroneopterin triphosphate from GTP: step 1/1. Its function is as follows. Converts GTP to 7,8-dihydroneopterin triphosphate. This Bordetella bronchiseptica (strain ATCC BAA-588 / NCTC 13252 / RB50) (Alcaligenes bronchisepticus) protein is GTP cyclohydrolase FolE2.